Here is an 815-residue protein sequence, read N- to C-terminus: MASIAHLVVSGLLAATAVNGQNYGGSGRSDDAFSYVQPRNTTILGQYGHSPAVLPSPNATGAGGWEEALAKAQQFVAQLTLEEKADMVTGQPGPCVGNIVAIPRLGFKGLCLQDGPLAIRVADYASVFSAGVTAASTWDKDILYERGVAMGEEFKGKGAHVALGPVAGPLGRSGYGGRNWEGFAADPYLTGVAMERTIQGYQDAGVQACAKHFIGNEQETQRNPNYNPNGTLTDVIQEAISSNIDDRTIHELYLWPFANAARAKVASVMCSYQRLNGSYACQNSKVLNGLLKEELGFQGYVQSDWGGTHSGVSSIEGGLDMNMPGGLGQYGQTPEAGSFFGKNVTFAVNNGTVDISRVDDMIVRIMTPYYWLGQDQGYPEIDPSSADLNTFSPRSTWLREFNLTGERSRDVRGDHGELIRRHGAEATILLKNENKALPLKAPKSIAVFGNDAGDTTEGAVNKATFEFGTLAAGGGSGTGRFTYLVTPLEALKARGKQDNTLVQWWLNNTLIADSDVTSLWVPTPPDACLVFLKTWAEEGSDREYLSVDWNGNEVVDSVASKCNNTIVVTHSSGINELPFANHPNVTAIVAAHYPGQESGNSIVDILYGDVNPSGKLPYTIAKNGSDYNAPPTTAVETTGADDWQAWFDEKLEIDYRYFDAHNISVLYEFGFGLSYTTFSLSDIKTEPLAESISSVPEQLPIQPGGNPALWESVYNVSVTVTNTGDVKGATVPQLYVTFPDSAPAGTPPKQLRGFDKVSLAPGESQTVGFELMRRDLSYWDVVSQEWLIPEGEFTIRVGFSSRDLSQETKITPVTA.

The first 20 residues, 1-20, serve as a signal peptide directing secretion; sequence MASIAHLVVSGLLAATAVNG. N-linked (GlcNAc...) asparagine glycosylation is found at Asn40, Asn58, Asn229, and Asn276. Residue Asp304 is part of the active site. Residues Asn343, Asn350, Asn402, Asn507, Asn563, Asn584, Asn623, Asn662, and Asn715 are each glycosylated (N-linked (GlcNAc...) asparagine).

This sequence belongs to the glycosyl hydrolase 3 family.

The protein resides in the secreted. It carries out the reaction Hydrolysis of terminal, non-reducing beta-D-glucosyl residues with release of beta-D-glucose.. Its pathway is glycan metabolism; cellulose degradation. Functionally, beta-glucosidases are one of a number of cellulolytic enzymes involved in the degradation of cellulosic biomass. Catalyzes the last step releasing glucose from the inhibitory cellobiose. The protein is Probable beta-glucosidase G (bglG) of Aspergillus flavus (strain ATCC 200026 / FGSC A1120 / IAM 13836 / NRRL 3357 / JCM 12722 / SRRC 167).